The primary structure comprises 630 residues: Phosphatidylinositol 4-kinase gamma 5 (630 aa).

In terms of domain architecture, Ubiquitin-like; degenerate spans R41–R98. A PI3K/PI4K catalytic domain is found at G162–P459. Residues V168–G174 form a G-loop region. ATP contacts are provided by residues N169–A175, K190, and Q279–I282. The catalytic loop stretch occupies residues L312–N320. The activation loop stretch occupies residues P339–I365. D341 serves as a coordination point for ATP. The tract at residues L500 to D527 is disordered. Positions T506–D524 are enriched in acidic residues. S571 is modified (phosphoserine).

It belongs to the PI3/PI4-kinase family. Type II PI4K subfamily. In terms of assembly, interacts with AHK2.

The catalysed reaction is a 1,2-diacyl-sn-glycero-3-phospho-(1D-myo-inositol) + ATP = a 1,2-diacyl-sn-glycero-3-phospho-(1D-myo-inositol 4-phosphate) + ADP + H(+). Its function is as follows. The phosphorylation of phosphatidylinositol (PI) to PI4P is the first committed step in the generation of phosphatidylinositol 4,5-bisphosphate (PIP2), a precursor of the second messenger inositol 1,4,5-trisphosphate (InsP3). The chain is Phosphatidylinositol 4-kinase gamma 5 (PI4KG5) from Arabidopsis thaliana (Mouse-ear cress).